Reading from the N-terminus, the 630-residue chain is MAAGVAAWLPFARAAAIGWMPVASGPMPAPPRQERKRTQDALIVLNVSGTRFQTWQDTLERYPDTLLGSSERDFFYHPETQQYFFDRDPDIFRHILNFYRTGKLHYPRHECISAYDEELAFFGLIPEIIGDCCYEEYKDRRRENAERLQDDADTDTAGESALPTMTARQRVWRAFENPHTSTMALVFYYVTGFFIAVSVIANVVETVPCGSSPGHIKELPCGERYAVAFFCLDTACVMIFTVEYLLRLAAAPSRYRFVRSVMSIIDVVAILPYYIGLVMTDNEDVSGAFVTLRVFRVFRIFKFSRHSQGLRILGYTLKSCASELGFLLFSLTMAIIIFATVMFYAEKGSSASKFTSIPAAFWYTIVTMTTLGYGDMVPKTIAGKIFGSICSLSGVLVIALPVPVIVSNFSRIYHQNQRADKRRAQKKARLARIRAAKSGSANAYMQSKRNGLLSNQLQSSEDEQAFVSKSGSSFETQHHHLLHCLEKTTNHEFVDEQVFEESCMEVATVNRPSSHSPSLSSQQGVTSTCCSRRHKKTFRIPNANVSGSHQGSIQELSTIQIRCVERTPLSNSRSSLNAKMEECVKLNCEQPYVTTAIISIPTPPVTTPEGDDRPESPEYSGGNIVRVSAL.

Residues 1–184 (MAAGVAAWLP…FENPHTSTMA (184 aa)) are Cytoplasmic-facing. An interaction with KCNIP1, KCNIP2, and other family members region spans residues 2-20 (AAGVAAWLPFARAAAIGWM). Thr38 is modified (phosphothreonine). The tract at residues 71 to 90 (ERDFFYHPETQQYFFDRDPD) is interaction with KCNIP1. The Zn(2+) site is built by His105, Cys111, Cys132, and Cys133. A helical membrane pass occupies residues 185-206 (LVFYYVTGFFIAVSVIANVVET). Residues 207–226 (VPCGSSPGHIKELPCGERYA) lie on the Extracellular side of the membrane. Residues 227-249 (VAFFCLDTACVMIFTVEYLLRLA) traverse the membrane as a helical segment. Residues 250–256 (AAPSRYR) lie on the Cytoplasmic side of the membrane. The chain crosses the membrane as a helical span at residues 257–281 (FVRSVMSIIDVVAILPYYIGLVMTD). Over 282-287 (NEDVSG) the chain is Extracellular. A helical; Voltage-sensor transmembrane segment spans residues 288-307 (AFVTLRVFRVFRIFKFSRHS). Topologically, residues 308–321 (QGLRILGYTLKSCA) are cytoplasmic. Residues 308–321 (QGLRILGYTLKSCA) are S4-S5 linker. A helical transmembrane segment spans residues 322 to 345 (SELGFLLFSLTMAIIIFATVMFYA). Residues 346 to 357 (EKGSSASKFTSI) lie on the Extracellular side of the membrane. Residues 358-369 (PAAFWYTIVTMT) constitute an intramembrane region (helical). K(+) is bound by residues Thr370, Leu371, Gly372, and Tyr373. Residues 370–375 (TLGYGD) carry the Selectivity filter motif. The stretch at 370–377 (TLGYGDMV) is an intramembrane region. Over 378–380 (PKT) the chain is Extracellular. Residues 381–403 (IAGKIFGSICSLSGVLVIALPVP) traverse the membrane as a helical segment. Over 404-630 (VIVSNFSRIY…GGNIVRVSAL (227 aa)) the chain is Cytoplasmic. Position 438 is a phosphoserine (Ser438). The segment at 474-489 (FETQHHHLLHCLEKTT) is required for dendritic targeting. The interval 474–630 (FETQHHHLLH…GGNIVRVSAL (157 aa)) is important for normal channel activation and inactivation, for interaction with KCNIP2, and probably other family members as well. A phosphoserine mark is found at Ser548, Ser552, Ser572, and Ser575. The interval 600–630 (IPTPPVTTPEGDDRPESPEYSGGNIVRVSAL) is disordered. Phosphothreonine occurs at positions 602 and 607. Residue Ser616 is modified to Phosphoserine. Positions 627–630 (VSAL) match the PDZ-binding motif.

The protein belongs to the potassium channel family. D (Shal) (TC 1.A.1.2) subfamily. Kv4.2/KCND2 sub-subfamily. Homotetramer or heterotetramer with KCND1 or KCND3. Associates with the regulatory subunits KCNIP2, KCNIP3 and KCNIP4. Interacts with the regulatory subunit KCNIP1; this interaction mediates the capture of both the N- and C-terminus of KCND2, preventing N-type inactivation and stabilizing the S6 conformation, thereby accelerating closed state inactivation and recovery. In vivo, probably exists as heteromeric complex containing variable proportions of KCND1, KCND2, KCND3, KCNIP1, KCNIP2, KCNIP3, KCNIP4, DPP6 and DPP10. The tetrameric channel can associate with up to four regulatory subunits, such as KCNIP2 or KCNIP4. Interaction with four KCNIP4 chains does not reduce interaction with DPP10. Interacts with DLG4 and NCS1/FREQ. Interacts with DLG1. Probably part of a complex consisting of KCNIP1, KCNIP2 isoform 3 and KCND2. Interacts with FLNA, FLNC and DPP10. Interacts (via S1 and S2 helices) with DPP6; this interaction stabilizes the conformation of the S1-S2 helices and facilitates S4 conformational change, including S4 sliding up and down, thereby accelerating activation, inactivation, and recovery. Phosphorylation at Ser-438 in response to MAPK activation is increased in stimulated dendrites. Interaction with KCNIP2 and DPP6 propomtes phosphorylation by PKA at Ser-552. Phosphorylation at Ser-552 has no effect on interaction with KCNIP3, but is required for the regulation of channel activity by KCNIP3. Phosphorylation at Ser-552 leads to KCND2 internalization. Phosphorylated by MAPK in response to signaling via the metabotropic glutamate receptor GRM5. Phosphorylation at Ser-616 is required for the down-regulation of neuronal A-type currents in response to signaling via GRM5. In terms of tissue distribution, detected in ovary, in corpus luteum and in granulosa and theca cells in the follicle (at protein level). Highly expressed throughout the brain. Detected in amygdala, caudate nucleus, cerebellum, hippocampus, substantia nigra and thalamus. Expression is not detectable or very low in heart, kidney, liver, lung, pancreas and skeletal muscle. Not detectable in human heart atrium.

It localises to the cell membrane. The protein localises to the cell projection. It is found in the dendrite. The protein resides in the synapse. Its subcellular location is the perikaryon. It localises to the postsynaptic cell membrane. The protein localises to the dendritic spine. It is found in the cell junction. It carries out the reaction K(+)(in) = K(+)(out). In terms of biological role, voltage-gated potassium channel that mediates transmembrane potassium transport in excitable membranes, primarily in the brain. Mediates the major part of the dendritic A-type current I(SA) in brain neurons. This current is activated at membrane potentials that are below the threshold for action potentials. It regulates neuronal excitability, prolongs the latency before the first spike in a series of action potentials, regulates the frequency of repetitive action potential firing, shortens the duration of action potentials and regulates the back-propagation of action potentials from the neuronal cell body to the dendrites. Contributes to the regulation of the circadian rhythm of action potential firing in suprachiasmatic nucleus neurons, which regulates the circadian rhythm of locomotor activity. Functions downstream of the metabotropic glutamate receptor GRM5 and plays a role in neuronal excitability and in nociception mediated by activation of GRM5. Mediates the transient outward current I(to) in rodent heart left ventricle apex cells, but not in human heart, where this current is mediated by another family member. Forms tetrameric potassium-selective channels through which potassium ions pass in accordance with their electrochemical gradient. The channel alternates between opened and closed conformations in response to the voltage difference across the membrane. Can form functional homotetrameric channels and heterotetrameric channels that contain variable proportions of KCND2 and KCND3; channel properties depend on the type of pore-forming alpha subunits that are part of the channel. In vivo, membranes probably contain a mixture of heteromeric potassium channel complexes. Interaction with specific isoforms of the regulatory subunits KCNIP1, KCNIP2, KCNIP3 or KCNIP4 strongly increases expression at the cell surface and thereby increases channel activity; it modulates the kinetics of channel activation and inactivation, shifts the threshold for channel activation to more negative voltage values, shifts the threshold for inactivation to less negative voltages and accelerates recovery after inactivation. Likewise, interaction with DPP6 or DPP10 promotes expression at the cell membrane and regulates both channel characteristics and activity. Upon depolarization, the channel goes from a resting closed state (C state) to an activated but non-conducting state (C* state), from there, the channel may either inactivate (I state) or open (O state). The protein is A-type voltage-gated potassium channel KCND2 of Homo sapiens (Human).